The primary structure comprises 424 residues: Tyrosine--tRNA ligase (424 aa).

Tyrosine 37 is a binding site for L-tyrosine. The 'HIGH' region motif lies at 42 to 51; that stretch reads PTADSLHLGH. Position 144 is an N6-acetyllysine (lysine 144). 2 residues coordinate L-tyrosine: tyrosine 175 and glutamine 179. Residues 235 to 239 carry the 'KMSKS' region motif; the sequence is KFGKT. Lysine 238 lines the ATP pocket. The S4 RNA-binding domain maps to 357–414; that stretch reads ADLMQALVDSELQPSRGQARKTIASNAITINGEKQSDPEYFFKEEDRLFGRFTLLRRG.

This sequence belongs to the class-I aminoacyl-tRNA synthetase family. TyrS type 1 subfamily. As to quaternary structure, homodimer.

The protein localises to the cytoplasm. The catalysed reaction is tRNA(Tyr) + L-tyrosine + ATP = L-tyrosyl-tRNA(Tyr) + AMP + diphosphate + H(+). Functionally, catalyzes the attachment of tyrosine to tRNA(Tyr) in a two-step reaction: tyrosine is first activated by ATP to form Tyr-AMP and then transferred to the acceptor end of tRNA(Tyr). In Shigella dysenteriae serotype 1 (strain Sd197), this protein is Tyrosine--tRNA ligase.